Consider the following 160-residue polypeptide: Large ribosomal subunit protein eL21 (160 aa).

Composition is skewed to basic and acidic residues over residues 112 to 123 (NDQKKKEAKEKG) and 136 to 145 (REAHFVRTNG). Positions 112 to 145 (NDQKKKEAKEKGTWVQLKRQPAPPREAHFVRTNG) are disordered.

This sequence belongs to the eukaryotic ribosomal protein eL21 family. As to quaternary structure, component of the large ribosomal subunit.

It localises to the cytoplasm. The protein localises to the cytosol. The protein resides in the endoplasmic reticulum. Component of the large ribosomal subunit. The ribosome is a large ribonucleoprotein complex responsible for the synthesis of proteins in the cell. This chain is Large ribosomal subunit protein eL21, found in Mus musculus (Mouse).